Consider the following 225-residue polypeptide: Ethylene-responsive transcription factor 3 (225 aa).

A compositionally biased stretch (low complexity) spans 1–12; that stretch reads MRRGRAAAAPAP. Disordered stretches follow at residues 1–29 and 82–193; these read MRRG…IRFR and NFPL…NIAS. Residues 27–84 constitute a DNA-binding region (AP2/ERF); the sequence is RFRGVRKRPWGRFAAEIRDPWKKTRVWLGTFDSAEDAARAYDAAARALRGPKAKTNFP. Low complexity predominate over residues 118-134; it reads SQRPTSSSMSSTVESFS. Positions 176 to 185 are enriched in basic and acidic residues; it reads DHGDCEKEND. The short motif at 202–208 is the EAR-like (transcriptional repression) element; it reads FDLNLPP.

It belongs to the ethylene-response factor family. Class 2 subfamily.

Its subcellular location is the nucleus. Transcription factor that binds to the GCC-box pathogenesis-related promoter element. Involved in the regulation of gene expression by stress factors and by components of stress signal transduction pathways. Probably acts as a transcriptional repressor and may regulate other AtERFs. This chain is Ethylene-responsive transcription factor 3 (ERF3), found in Nicotiana tabacum (Common tobacco).